The sequence spans 315 residues: UDP-3-O-acyl-N-acetylglucosamine deacetylase (315 aa).

Zn(2+) is bound by residues histidine 78, histidine 235, and aspartate 239. Histidine 262 serves as the catalytic Proton donor.

Belongs to the LpxC family. Zn(2+) serves as cofactor.

The catalysed reaction is a UDP-3-O-[(3R)-3-hydroxyacyl]-N-acetyl-alpha-D-glucosamine + H2O = a UDP-3-O-[(3R)-3-hydroxyacyl]-alpha-D-glucosamine + acetate. It functions in the pathway glycolipid biosynthesis; lipid IV(A) biosynthesis; lipid IV(A) from (3R)-3-hydroxytetradecanoyl-[acyl-carrier-protein] and UDP-N-acetyl-alpha-D-glucosamine: step 2/6. In terms of biological role, catalyzes the hydrolysis of UDP-3-O-myristoyl-N-acetylglucosamine to form UDP-3-O-myristoylglucosamine and acetate, the committed step in lipid A biosynthesis. The protein is UDP-3-O-acyl-N-acetylglucosamine deacetylase of Syntrophus aciditrophicus (strain SB).